The chain runs to 112 residues: Probable small nuclear ribonucleoprotein Sm D2 (112 aa).

The segment covering 1-15 has biased composition (basic and acidic residues); it reads MSRMNDETMEDKPDD. Residues 1-23 form a disordered region; it reads MSRMNDETMEDKPDDSNGPLSIL. The 87-residue stretch at 20–106 folds into the Sm domain; it reads LSILMDSVNN…VILVLKNPLG (87 aa).

This sequence belongs to the snRNP core protein family.

The protein localises to the nucleus. It localises to the cytoplasm. It is found in the cytosol. In terms of biological role, plays a role in pre-mRNA splicing as a core component of the spliceosomal U1, U2, U4 and U5 small nuclear ribonucleoproteins (snRNPs), the building blocks of the spliceosome. This is Probable small nuclear ribonucleoprotein Sm D2 (snrpd2) from Dictyostelium discoideum (Social amoeba).